Reading from the N-terminus, the 130-residue chain is Small ribosomal subunit protein uS9 (130 aa).

Basic and acidic residues predominate over residues 99-110; the sequence is KKAGFLTRDPRM. The segment at 99 to 130 is disordered; it reads KKAGFLTRDPRMKERKKYGLKKARRAPQFSKR. A compositionally biased stretch (basic residues) spans 111 to 130; the sequence is KERKKYGLKKARRAPQFSKR.

This sequence belongs to the universal ribosomal protein uS9 family.

The polypeptide is Small ribosomal subunit protein uS9 (Clostridium botulinum (strain Eklund 17B / Type B)).